Reading from the N-terminus, the 121-residue chain is Ribulose bisphosphate carboxylase small subunit (121 aa).

This sequence belongs to the RuBisCO small chain family. As to quaternary structure, heterohexadecamer of 8 large and 8 small subunits.

RuBisCO catalyzes two reactions: the carboxylation of D-ribulose 1,5-bisphosphate, the primary event in carbon dioxide fixation, as well as the oxidative fragmentation of the pentose substrate. Both reactions occur simultaneously and in competition at the same active site. Although the small subunit is not catalytic it is essential for maximal activity. This is Ribulose bisphosphate carboxylase small subunit from Alvinoconcha hessleri symbiotic bacterium.